A 170-amino-acid polypeptide reads, in one-letter code: Small ribosomal subunit protein uS3mA (170 aa).

A mitochondrion-targeting transit peptide spans 1–30 (MAAPVMSALGRLQGLIRTERSLLTHVQSRC).

It belongs to the universal ribosomal protein uS3 family. As to quaternary structure, component of the mitochondrial ribosome small subunit (28S) which comprises a 12S rRNA and about 30 distinct proteins.

The protein resides in the mitochondrion. The polypeptide is Small ribosomal subunit protein uS3mA (mrps24-a) (Xenopus laevis (African clawed frog)).